A 546-amino-acid polypeptide reads, in one-letter code: Probable sucrose-6-phosphate hydrolase (546 aa).

Substrate-binding positions include 105-108, glutamine 124, 167-168, 228-229, and glutamate 283; these read LLND, FS, and RD. The active site involves aspartate 108.

Belongs to the glycosyl hydrolase 32 family.

It localises to the cytoplasm. It catalyses the reaction Hydrolysis of terminal non-reducing beta-D-fructofuranoside residues in beta-D-fructofuranosides.. The protein operates within glycan biosynthesis; sucrose metabolism. Its function is as follows. Enables the bacterium to metabolize sucrose as a sole carbon source. This is Probable sucrose-6-phosphate hydrolase from Vibrio cholerae.